The primary structure comprises 239 residues: Small ribosomal subunit protein uS2c (239 aa).

This sequence belongs to the universal ribosomal protein uS2 family.

It localises to the plastid. It is found in the organellar chromatophore. The polypeptide is Small ribosomal subunit protein uS2c (rps2) (Paulinella chromatophora).